The following is a 439-amino-acid chain: Alpha-1,3-mannosyl-glycoprotein 4-beta-N-acetylglucosaminyltransferase-like protein MGAT4E (439 aa).

It participates in protein modification; protein glycosylation. Functionally, glycosyltransferase-like protein that may participate in the transfer of N-acetylglucosamine (GlcNAc) to the core mannose residues of N-linked glycans. The protein is Alpha-1,3-mannosyl-glycoprotein 4-beta-N-acetylglucosaminyltransferase-like protein MGAT4E of Mus musculus (Mouse).